Reading from the N-terminus, the 113-residue chain is U11-theraphotoxin-Hhn1e (113 aa).

The N-terminal stretch at 1 to 21 is a signal peptide; the sequence is MNTVRVTFLLVFVLAVSLGQA. Positions 22–74 are excised as a propeptide; it reads DKDENRMEMLEKTEQGKSYLDFAENLLLQKLEELEARLLEEDSEESRNSRQKR. A compositionally biased stretch (basic and acidic residues) spans 60–69; sequence LEEDSEESRN. Residues 60-87 are disordered; it reads LEEDSEESRNSRQKRCIGEGVPRDENDP. 2 disulfides stabilise this stretch: Cys-75/Cys-90 and Cys-89/Cys-110.

It belongs to the neurotoxin 14 (magi-1) family. 01 (HNTX-16) subfamily. Expressed by the venom gland.

The protein localises to the secreted. Probable ion channel inhibitor. This chain is U11-theraphotoxin-Hhn1e, found in Cyriopagopus hainanus (Chinese bird spider).